Here is a 360-residue protein sequence, read N- to C-terminus: Histidinol-phosphate aminotransferase (360 aa).

Lys-211 carries the N6-(pyridoxal phosphate)lysine modification.

This sequence belongs to the class-II pyridoxal-phosphate-dependent aminotransferase family. Histidinol-phosphate aminotransferase subfamily. Homodimer. Requires pyridoxal 5'-phosphate as cofactor.

It carries out the reaction L-histidinol phosphate + 2-oxoglutarate = 3-(imidazol-4-yl)-2-oxopropyl phosphate + L-glutamate. Its pathway is amino-acid biosynthesis; L-histidine biosynthesis; L-histidine from 5-phospho-alpha-D-ribose 1-diphosphate: step 7/9. In Cronobacter sakazakii (strain ATCC BAA-894) (Enterobacter sakazakii), this protein is Histidinol-phosphate aminotransferase.